The primary structure comprises 225 residues: MGQKVNPIGLRIGITRGWDSIWFSQSDYKKNLHEDIKIRKFVQNRFNNAGVVKVVIERFPEKINVNLHTAKPGIVIGQKGANIEAVKKILKTMTDKPVNLNIIEVKKPETVAQCIAESIALQIEQRQPFRRVMKQELRRAMRGGVEGIKILISGRLNGADMARRENYKEGRIPLHTLRAKIDLGFKEAKTTFGQIGVKVWTYSGDFIQSKEESEEDKYAVKRRTS.

In terms of domain architecture, KH type-2 spans 38–106 (IRKFVQNRFN…PVNLNIIEVK (69 aa)).

It belongs to the universal ribosomal protein uS3 family. In terms of assembly, part of the 30S ribosomal subunit. Forms a tight complex with proteins S10 and S14.

Its function is as follows. Binds the lower part of the 30S subunit head. Binds mRNA in the 70S ribosome, positioning it for translation. This is Small ribosomal subunit protein uS3 from Leptospira interrogans serogroup Icterohaemorrhagiae serovar copenhageni (strain Fiocruz L1-130).